The chain runs to 328 residues: UPF0421 protein SSP0904 (328 aa).

A run of 4 helical transmembrane segments spans residues 26 to 46 (LFCLALNLNPIFAILTAIVTI), 61 to 81 (LPATIIGALFAVIFTFIFGDQ), 84 to 104 (FAYALSATFTIILCTKLNLHV), and 132 to 152 (LLTAIIGLVTAGLVNFIILPP).

The protein belongs to the UPF0421 family.

It localises to the cell membrane. The sequence is that of UPF0421 protein SSP0904 from Staphylococcus saprophyticus subsp. saprophyticus (strain ATCC 15305 / DSM 20229 / NCIMB 8711 / NCTC 7292 / S-41).